Here is a 235-residue protein sequence, read N- to C-terminus: Ribonuclease PH (235 aa).

Phosphate contacts are provided by residues R86 and 124 to 126; that span reads GTR.

It belongs to the RNase PH family. As to quaternary structure, homohexameric ring arranged as a trimer of dimers.

The enzyme catalyses tRNA(n+1) + phosphate = tRNA(n) + a ribonucleoside 5'-diphosphate. Functionally, phosphorolytic 3'-5' exoribonuclease that plays an important role in tRNA 3'-end maturation. Removes nucleotide residues following the 3'-CCA terminus of tRNAs; can also add nucleotides to the ends of RNA molecules by using nucleoside diphosphates as substrates, but this may not be physiologically important. Probably plays a role in initiation of 16S rRNA degradation (leading to ribosome degradation) during starvation. This Legionella pneumophila (strain Corby) protein is Ribonuclease PH.